The primary structure comprises 236 residues: MNNIDQQEVEKFEKMAKTWWDPQGDFKPIHLLNPLRLAYINDKTNGLFGKKVLDIGCGGGILSESMAGLGAIVTGIDMAADALLVARQHAESNHLNICYQQITVEDFLKQHCITDTEKFDIITCMEVLEHVPNPHSIIQSCKNLLKEDGLLFISTINRTAKAYMLIIIGAEYVLKMLPKGTHNFEKFIKPSELLRWCSQEDFECKEIVGYHFNPLTKNFWINKDINCNYIAVLQNS.

4 residues coordinate S-adenosyl-L-methionine: Arg36, Gly56, Asp77, and Met125.

This sequence belongs to the methyltransferase superfamily. UbiG/COQ3 family.

The enzyme catalyses a 3-demethylubiquinol + S-adenosyl-L-methionine = a ubiquinol + S-adenosyl-L-homocysteine + H(+). It catalyses the reaction a 3-(all-trans-polyprenyl)benzene-1,2-diol + S-adenosyl-L-methionine = a 2-methoxy-6-(all-trans-polyprenyl)phenol + S-adenosyl-L-homocysteine + H(+). The protein operates within cofactor biosynthesis; ubiquinone biosynthesis. In terms of biological role, O-methyltransferase that catalyzes the 2 O-methylation steps in the ubiquinone biosynthetic pathway. The protein is Ubiquinone biosynthesis O-methyltransferase of Glaesserella parasuis serovar 5 (strain SH0165) (Haemophilus parasuis).